Consider the following 883-residue polypeptide: Glutamate receptor 2 (883 aa).

An N-terminal signal peptide occupies residues 1–24; that stretch reads MQKIMHISVLLSPVLWGLIFGVSS. Residues 25–543 are Extracellular-facing; sequence NSIQIGGLFP…GVFSFLDPLA (519 aa). C78 and C330 are joined by a disulfide. N-linked (GlcNAc...) asparagine glycosylation is found at N256, N370, N406, and N413. L-glutamate-binding residues include P499, T501, and R506. Residues 544–564 form a helical membrane-spanning segment; sequence YEIWMCIVFAYIGVSVVLFLV. Residues 565 to 591 lie on the Cytoplasmic side of the membrane; it reads SRFSPYEWHTEEFEDGRETQSSESTNE. An intramembrane region (helical; Pore-forming) is located at residues 592-607; it reads FGIFNSLWFSLGAFMQ. An intramembrane segment occupies 608-610; the sequence is QGC. C610 carries the S-palmitoyl cysteine lipid modification. Topologically, residues 611–616 are cytoplasmic; that stretch reads DISPRS. A helical membrane pass occupies residues 617–637; it reads LSGRIVGGVWWFFTLIIISSY. Topologically, residues 638 to 812 are extracellular; the sequence is TANLAAFLTV…EKTSALSLSN (175 aa). L-glutamate is bound by residues S675 and T676. S683 carries the post-translational modification Phosphoserine; by PKC. S717 carries the phosphoserine; by PKG modification. An L-glutamate-binding site is contributed by E726. The cysteines at positions 739 and 794 are disulfide-linked. Residues 813-833 traverse the membrane as a helical segment; that stretch reads VAGVFYILVGGLGLAMLVALI. Over 834–883 the chain is Cytoplasmic; the sequence is EFCYKSRAEAKRMKVAKNAQNINPSSSQNSQNFATYKEGYNVYGIESVKI. Residue C836 is the site of S-palmitoyl cysteine attachment. A phosphoserine mark is found at S860 and S863. Positions 867-877 are required for interaction with IQSEC1; the sequence is ATYKEGYNVYG. Y876 is modified (phosphotyrosine). Position 880 is a phosphoserine (S880).

The protein belongs to the glutamate-gated ion channel (TC 1.A.10.1) family. GRIA2 subfamily. In terms of assembly, homotetramer or heterotetramer of pore-forming glutamate receptor subunits. Tetramers may be formed by the dimerization of dimers. May interact with MPP4. Forms a ternary complex with GRIP1 and CSPG4. Interacts with ATAD1 in an ATP-dependent manner. ATAD1-catalyzed ATP hydrolysis disrupts binding to ATAD1 and to GRIP1 and leads to AMPAR complex disassembly. Interacts with GRIP1 and GRIP2. Interacts with NSF via its C-terminus. Isoform 1, but not isoform 3, interacts with PICK1. Interacts with CACNG2. Interacts with GRIA1 and SYNDIG1. Part of a complex containing GRIA2, NSF and NAPA and/or NAPB. Interacts with SNX27 (via PDZ domain); the interaction is required for recycling to the plasma membrane when endocytosed and prevent degradation in lysosomes. Interacts with LRFN1. Found in a complex with GRIA1, GRIA3, GRIA4, CNIH2, CNIH3, CACNG2, CACNG3, CACNG4, CACNG5, CACNG7 and CACNG8. Interacts with CACNG5. Interacts with OLFM2. Interacts with AP4B1, AP4E1 and AP4M1; probably indirect it mediates the somatodendritic localization of GRIA2 in neurons. Forms a complex with GRIP1, NSG1 and STX12; controls the intracellular fate of AMPAR and the endosomal sorting of the GRIA2 subunit toward recycling and membrane targeting. Interacts with IQSEC1; the interaction is required for ARF6 activation. Interacts (heterotetramer form) with CNIH2 and CNIH3; this interaction promotes expression at the plasma membrane and extensively modulates their gating properties by slowing deactivation and desensitization kinetics. In terms of processing, palmitoylated. Depalmitoylated upon L-glutamate stimulation. ZDHHC3/GODZ specifically palmitoylates Cys-610, which leads to Golgi retention and decreased cell surface expression. In contrast, Cys-836 palmitoylation does not affect cell surface expression but regulates stimulation-dependent endocytosis. N-glycosylated. Post-translationally, ubiquitinated by RNF167, leading to its degradation. In terms of processing, phosphorylation at Tyr-876 is required for interaction with IQSEC1 and ARF6 activation, which in turn triggers AMPAR internalization for persistent synaptic depression. As to expression, detected in brain cortex, hippocampus and cerebellum (at protein level). Detected in hippocampus.

The protein localises to the cell membrane. It localises to the postsynaptic cell membrane. It is found in the postsynaptic density membrane. It catalyses the reaction Ca(2+)(in) = Ca(2+)(out). It carries out the reaction Na(+)(in) = Na(+)(out). Ionotropic glutamate receptor that functions as a ligand-gated cation channel, gated by L-glutamate and glutamatergic agonists such as alpha-amino-3-hydroxy-5-methyl-4-isoxazolepropionic acid (AMPA), quisqualic acid, and kainic acid. L-glutamate acts as an excitatory neurotransmitter at many synapses in the central nervous system and plays an important role in fast excitatory synaptic transmission. Binding of the excitatory neurotransmitter L-glutamate induces a conformation change, leading to the opening of the cation channel, and thereby converts the chemical signal to an electrical impulse upon entry of monovalent and divalent cations such as sodium and calcium. The receptor then desensitizes rapidly and enters in a transient inactive state, characterized by the presence of bound agonist. In the presence of CACNG4 or CACNG7 or CACNG8, shows resensitization which is characterized by a delayed accumulation of current flux upon continued application of L-glutamate. Through complex formation with NSG1, GRIP1 and STX12 controls the intracellular fate of AMPAR and the endosomal sorting of the GRIA2 subunit toward recycling and membrane targeting. This Mus musculus (Mouse) protein is Glutamate receptor 2.